Here is a 406-residue protein sequence, read N- to C-terminus: Acetate kinase (406 aa).

N7 is a binding site for Mg(2+). An ATP-binding site is contributed by K14. A substrate-binding site is contributed by R90. The active-site Proton donor/acceptor is D147. ATP contacts are provided by residues 207-211, 283-285, and 331-335; these read HLGNG, DMR, and GVGEN. Residue E385 coordinates Mg(2+).

This sequence belongs to the acetokinase family. Homodimer. Requires Mg(2+) as cofactor. The cofactor is Mn(2+).

The protein localises to the cytoplasm. The catalysed reaction is acetate + ATP = acetyl phosphate + ADP. It participates in metabolic intermediate biosynthesis; acetyl-CoA biosynthesis; acetyl-CoA from acetate: step 1/2. Its function is as follows. Catalyzes the formation of acetyl phosphate from acetate and ATP. Can also catalyze the reverse reaction. This Fervidobacterium nodosum (strain ATCC 35602 / DSM 5306 / Rt17-B1) protein is Acetate kinase.